The following is a 760-amino-acid chain: Xaa-Pro dipeptidyl-peptidase (760 aa).

Active-site charge relay system residues include serine 349, aspartate 469, and histidine 499.

Belongs to the peptidase S15 family. As to quaternary structure, homodimer.

It localises to the cytoplasm. It carries out the reaction Hydrolyzes Xaa-Pro-|- bonds to release unblocked, N-terminal dipeptides from substrates including Ala-Pro-|-p-nitroanilide and (sequentially) Tyr-Pro-|-Phe-Pro-|-Gly-Pro-|-Ile.. Removes N-terminal dipeptides sequentially from polypeptides having unsubstituted N-termini provided that the penultimate residue is proline. The sequence is that of Xaa-Pro dipeptidyl-peptidase from Streptococcus pyogenes serotype M6 (strain ATCC BAA-946 / MGAS10394).